The following is a 619-amino-acid chain: DNA mismatch repair protein MutL (619 aa).

Belongs to the DNA mismatch repair MutL/HexB family.

In terms of biological role, this protein is involved in the repair of mismatches in DNA. It is required for dam-dependent methyl-directed DNA mismatch repair. May act as a 'molecular matchmaker', a protein that promotes the formation of a stable complex between two or more DNA-binding proteins in an ATP-dependent manner without itself being part of a final effector complex. The protein is DNA mismatch repair protein MutL of Xylella fastidiosa (strain M23).